The primary structure comprises 87 residues: Putative defensin-like protein 235 (87 aa).

The N-terminal stretch at 1–26 (MRSATFFLVSCVLMSFVLSHVKEVEA) is a signal peptide. Disulfide bonds link cysteine 46–cysteine 73, cysteine 54–cysteine 82, and cysteine 71–cysteine 84.

This sequence belongs to the DEFL family.

It is found in the secreted. In Arabidopsis thaliana (Mouse-ear cress), this protein is Putative defensin-like protein 235 (SCRL26).